An 857-amino-acid polypeptide reads, in one-letter code: Cation/H(+) antiporter 25 (857 aa).

Transmembrane regions (helical) follow at residues phenylalanine 65–leucine 85, arginine 93–glycine 110, proline 122–leucine 142, tyrosine 161–leucine 181, serine 194–leucine 214, phenylalanine 227–glutamate 247, tyrosine 259–valine 279, phenylalanine 313–valine 333, isoleucine 385–phenylalanine 405, serine 413–isoleucine 435, and valine 447–tyrosine 467. Serine 855 bears the Phosphoserine mark.

Belongs to the monovalent cation:proton antiporter 2 (CPA2) transporter (TC 2.A.37) family. CHX (TC 2.A.37.4) subfamily. Specifically expressed in pollen.

The protein resides in the membrane. May operate as a cation/H(+) antiporter. The protein is Cation/H(+) antiporter 25 (CHX25) of Arabidopsis thaliana (Mouse-ear cress).